The following is a 444-amino-acid chain: Jacalin-related lectin 11 (444 aa).

A2 carries the N-acetylalanine modification. Jacalin-type lectin domains are found at residues A2 to K143, S146 to P290, and P298 to A442.

It belongs to the jacalin lectin family.

This Arabidopsis thaliana (Mouse-ear cress) protein is Jacalin-related lectin 11 (JAL11).